Reading from the N-terminus, the 578-residue chain is 2-hydroxyacyl-CoA lyase 1 (578 aa).

Phosphoserine is present on S4. E60 is a binding site for thiamine diphosphate. Residues K351, K358, and K365 each carry the N6-succinyllysine modification. The segment at 401–486 (TMDIGRTVLQ…LLVVNNNGIY (86 aa)) is thiamine pyrophosphate binding. The Mg(2+) site is built by D455 and N482. The Microbody targeting signal signature appears at 576 to 578 (SNM).

The protein belongs to the TPP enzyme family. Homotetramer. Requires Mg(2+) as cofactor. The cofactor is thiamine diphosphate. In terms of tissue distribution, widely expressed.

The protein resides in the peroxisome. It carries out the reaction a 2-hydroxy-3-methyl fatty acyl-CoA = a 2-methyl-branched fatty aldehyde + formyl-CoA. The enzyme catalyses an (R)-2-hydroxy-long-chain-fatty acyl-CoA = a long-chain fatty aldehyde + formyl-CoA. The catalysed reaction is 2-hydroxy-3-methylhexadecanoyl-CoA = 2-methylpentadecanal + formyl-CoA. It catalyses the reaction 2-hydroxyoctadecanoyl-CoA = heptadecanal + formyl-CoA. It carries out the reaction 2-hydroxyphytanoyl-CoA = 2,6,10,14-tetramethylpentadecanal + formyl-CoA. The protein operates within lipid metabolism; fatty acid metabolism. Peroxisomal 2-OH acyl-CoA lyase involved in the cleavage (C1 removal) reaction in the fatty acid alpha-oxydation in a thiamine pyrophosphate (TPP)-dependent manner. Involved in the degradation of 3-methyl-branched fatty acids like phytanic acid and the shortening of 2-hydroxy long-chain fatty acids. Plays a significant role in the biosynthesis of heptadecanal in the liver. This Homo sapiens (Human) protein is 2-hydroxyacyl-CoA lyase 1.